Here is a 307-residue protein sequence, read N- to C-terminus: Replication termination factor 2 (307 aa).

Positions 193–296 are disordered; it reads AKLEKKTKKP…SSAKRSKEES (104 aa). Positions 227-241 are enriched in basic and acidic residues; the sequence is GKPEEADPDPREKKS. A Phosphoserine modification is found at serine 288.

It belongs to the rtf2 family. Interacts with DDI2; probably also interacts with DDI1. Post-translationally, undergoes proteasomal degradation, via DDI1 and DDI2. Removal from stalled replisomes and degradation are required for genome stability.

Its subcellular location is the chromosome. Its function is as follows. Replication termination factor which is a component of the elongating replisome. Required for ATR pathway signaling upon DNA damage and has a positive activity during DNA replication. Might function to facilitate fork pausing at replication fork barriers like the rDNA. May be globally required to stimulate ATR signaling after the fork stalls or encounters a lesion. Interacts with nascent DNA. This is Replication termination factor 2 from Mus musculus (Mouse).